Consider the following 363-residue polypeptide: Flagellar P-ring protein (363 aa).

A signal peptide spans 1–18 (MWKKVLIAIVFITSFSFA).

The protein belongs to the FlgI family. The basal body constitutes a major portion of the flagellar organelle and consists of four rings (L,P,S, and M) mounted on a central rod.

It localises to the periplasm. It is found in the bacterial flagellum basal body. Assembles around the rod to form the L-ring and probably protects the motor/basal body from shearing forces during rotation. The protein is Flagellar P-ring protein of Sulfurihydrogenibium sp. (strain YO3AOP1).